A 442-amino-acid chain; its full sequence is Putative aminohydrolase SsnA (442 aa).

His-62, His-64, His-227, and Asp-312 together coordinate Zn(2+).

This sequence belongs to the metallo-dependent hydrolases superfamily. ATZ/TRZ family.

The chain is Putative aminohydrolase SsnA (ssnA) from Escherichia coli (strain K12).